The following is a 371-amino-acid chain: N-acetyldiaminopimelate deacetylase (371 aa).

The active site involves aspartate 68. Residue glutamate 127 is the Proton acceptor of the active site.

It belongs to the peptidase M20A family. N-acetyldiaminopimelate deacetylase subfamily.

It catalyses the reaction N-acetyl-(2S,6S)-2,6-diaminopimelate + H2O = (2S,6S)-2,6-diaminopimelate + acetate. Its pathway is amino-acid biosynthesis; L-lysine biosynthesis via DAP pathway; LL-2,6-diaminopimelate from (S)-tetrahydrodipicolinate (acetylase route): step 3/3. In terms of biological role, catalyzes the conversion of N-acetyl-diaminopimelate to diaminopimelate and acetate. The protein is N-acetyldiaminopimelate deacetylase of Oceanobacillus iheyensis (strain DSM 14371 / CIP 107618 / JCM 11309 / KCTC 3954 / HTE831).